Here is a 377-residue protein sequence, read N- to C-terminus: Flap endonuclease 1 (377 aa).

Residues 1-105 form an N-domain region; sequence MGIKGLNAII…HELSKRTARR (105 aa). Asp34 contacts Mg(2+). The DNA site is built by Arg47 and Arg71. Mg(2+) is bound at residue Asp87. Positions 99–119 are disordered; that stretch reads SKRTARREETEKKLQEATDQA. The segment at 120–251 is I-domain; the sequence is EKMKQERRLV…VTALKLIKEY (132 aa). Mg(2+) contacts are provided by Glu156, Glu158, Asp177, and Asp179. Glu156 contacts DNA. Gly229 and Asp231 together coordinate DNA. Asp231 contributes to the Mg(2+) binding site. Residues 338–346 form an interaction with PCNA region; that stretch reads VQGRLDGFF.

The protein belongs to the XPG/RAD2 endonuclease family. FEN1 subfamily. Interacts with PCNA. Three molecules of FEN1 bind to one PCNA trimer with each molecule binding to one PCNA monomer. PCNA stimulates the nuclease activity without altering cleavage specificity. Mg(2+) serves as cofactor. Post-translationally, phosphorylated. Phosphorylation upon DNA damage induces relocalization to the nuclear plasma.

The protein localises to the nucleus. It localises to the nucleolus. Its subcellular location is the nucleoplasm. It is found in the mitochondrion. In terms of biological role, structure-specific nuclease with 5'-flap endonuclease and 5'-3' exonuclease activities involved in DNA replication and repair. During DNA replication, cleaves the 5'-overhanging flap structure that is generated by displacement synthesis when DNA polymerase encounters the 5'-end of a downstream Okazaki fragment. It enters the flap from the 5'-end and then tracks to cleave the flap base, leaving a nick for ligation. Also involved in the long patch base excision repair (LP-BER) pathway, by cleaving within the apurinic/apyrimidinic (AP) site-terminated flap. Acts as a genome stabilization factor that prevents flaps from equilibrating into structures that lead to duplications and deletions. Also possesses 5'-3' exonuclease activity on nicked or gapped double-stranded DNA, and exhibits RNase H activity. Also involved in replication and repair of rDNA and in repairing mitochondrial DNA. In Vanderwaltozyma polyspora (strain ATCC 22028 / DSM 70294 / BCRC 21397 / CBS 2163 / NBRC 10782 / NRRL Y-8283 / UCD 57-17) (Kluyveromyces polysporus), this protein is Flap endonuclease 1.